The chain runs to 312 residues: Ornithine carbamoyltransferase (312 aa).

Residues 60 to 63 (STRT), Gln-87, Arg-111, and 138 to 141 (HPCQ) contribute to the carbamoyl phosphate site. L-ornithine is bound by residues Asn-169, Asp-229, and 233 to 234 (SM). Residues 268 to 269 (CL) and Arg-296 contribute to the carbamoyl phosphate site.

Belongs to the aspartate/ornithine carbamoyltransferase superfamily. OTCase family.

The protein localises to the cytoplasm. The catalysed reaction is carbamoyl phosphate + L-ornithine = L-citrulline + phosphate + H(+). It functions in the pathway amino-acid biosynthesis; L-arginine biosynthesis; L-arginine from L-ornithine and carbamoyl phosphate: step 1/3. In terms of biological role, reversibly catalyzes the transfer of the carbamoyl group from carbamoyl phosphate (CP) to the N(epsilon) atom of ornithine (ORN) to produce L-citrulline. In Rhodopseudomonas palustris (strain BisA53), this protein is Ornithine carbamoyltransferase.